The sequence spans 241 residues: MKSLYALIFLLFVIVVSYIFNGLWSVFNIKHVFWVNLFLLIAFHPQHLDGLIILLLIPLKIFSNFKLKLQCIIALVGILLTIIKGVIKSGFGWILRILFFFVRMMTVSFINLVVFSILLTSVYVLGYVAFLKPDDIQFGTLYTAFGGLALLGAGIKIIQHFIKQSEEIAQEEFKKWYETEVKNFMYSLFITAKNAFPKFLDDLLAKGVVSQEEYQNLIKLYSHILARILKNDEEKMKIPTF.

5 consecutive transmembrane segments (helical) span residues 7-27 (LIFL…WSVF), 37-57 (LFLL…LLLI), 72-92 (IIAL…SGFG), 110-130 (INLV…YVAF), and 138-158 (FGTL…IKII).

The protein resides in the cell membrane. This is an uncharacterized protein from Methanocaldococcus jannaschii (strain ATCC 43067 / DSM 2661 / JAL-1 / JCM 10045 / NBRC 100440) (Methanococcus jannaschii).